The sequence spans 393 residues: Acyl-homoserine-lactone synthase OpaM (393 aa).

Belongs to the LuxM / VanM family.

It carries out the reaction a fatty acyl-[ACP] + S-adenosyl-L-methionine = an N-acyl-L-homoserine lactone + S-methyl-5'-thioadenosine + holo-[ACP] + H(+). In Vibrio parahaemolyticus serotype O3:K6 (strain RIMD 2210633), this protein is Acyl-homoserine-lactone synthase OpaM (opaM).